Reading from the N-terminus, the 229-residue chain is 2-C-methyl-D-erythritol 4-phosphate cytidylyltransferase (229 aa).

This sequence belongs to the IspD/TarI cytidylyltransferase family. IspD subfamily.

The catalysed reaction is 2-C-methyl-D-erythritol 4-phosphate + CTP + H(+) = 4-CDP-2-C-methyl-D-erythritol + diphosphate. It participates in isoprenoid biosynthesis; isopentenyl diphosphate biosynthesis via DXP pathway; isopentenyl diphosphate from 1-deoxy-D-xylulose 5-phosphate: step 2/6. Functionally, catalyzes the formation of 4-diphosphocytidyl-2-C-methyl-D-erythritol from CTP and 2-C-methyl-D-erythritol 4-phosphate (MEP). This Neisseria meningitidis serogroup C / serotype 2a (strain ATCC 700532 / DSM 15464 / FAM18) protein is 2-C-methyl-D-erythritol 4-phosphate cytidylyltransferase.